The chain runs to 443 residues: 3-isopropylmalate dehydratase large subunit (443 aa).

[4Fe-4S] cluster-binding residues include Cys347, Cys407, and Cys410.

This sequence belongs to the aconitase/IPM isomerase family. LeuC type 1 subfamily. Heterodimer of LeuC and LeuD. [4Fe-4S] cluster serves as cofactor.

The enzyme catalyses (2R,3S)-3-isopropylmalate = (2S)-2-isopropylmalate. It participates in amino-acid biosynthesis; L-leucine biosynthesis; L-leucine from 3-methyl-2-oxobutanoate: step 2/4. Catalyzes the isomerization between 2-isopropylmalate and 3-isopropylmalate, via the formation of 2-isopropylmaleate. In Buchnera aphidicola subsp. Uroleucon sonchi, this protein is 3-isopropylmalate dehydratase large subunit.